The chain runs to 447 residues: Adenylosuccinate synthetase (447 aa).

Residues 12–18 (GDEGKGK) and 40–42 (GHT) contribute to the GTP site. Aspartate 13 functions as the Proton acceptor in the catalytic mechanism. The Mg(2+) site is built by aspartate 13 and glycine 40. IMP contacts are provided by residues 13-16 (DEGK), 38-41 (NAGH), threonine 128, arginine 142, glutamine 223, threonine 238, and arginine 302. Histidine 41 acts as the Proton donor in catalysis. 298–304 (TTTGRRR) lines the substrate pocket. GTP-binding positions include arginine 304, 330-332 (KLD), and 412-414 (SLG).

It belongs to the adenylosuccinate synthetase family. In terms of assembly, homodimer. Mg(2+) is required as a cofactor.

The protein resides in the cytoplasm. It catalyses the reaction IMP + L-aspartate + GTP = N(6)-(1,2-dicarboxyethyl)-AMP + GDP + phosphate + 2 H(+). Its pathway is purine metabolism; AMP biosynthesis via de novo pathway; AMP from IMP: step 1/2. Functionally, plays an important role in the de novo pathway of purine nucleotide biosynthesis. Catalyzes the first committed step in the biosynthesis of AMP from IMP. The chain is Adenylosuccinate synthetase from Microcystis aeruginosa (strain NIES-843 / IAM M-2473).